The primary structure comprises 272 residues: Ribosomal RNA small subunit methyltransferase A (272 aa).

S-adenosyl-L-methionine is bound by residues Asn-18, Leu-20, Gly-45, Glu-66, Asp-91, and Asn-113.

This sequence belongs to the class I-like SAM-binding methyltransferase superfamily. rRNA adenine N(6)-methyltransferase family. RsmA subfamily.

It localises to the cytoplasm. The enzyme catalyses adenosine(1518)/adenosine(1519) in 16S rRNA + 4 S-adenosyl-L-methionine = N(6)-dimethyladenosine(1518)/N(6)-dimethyladenosine(1519) in 16S rRNA + 4 S-adenosyl-L-homocysteine + 4 H(+). Specifically dimethylates two adjacent adenosines (A1518 and A1519) in the loop of a conserved hairpin near the 3'-end of 16S rRNA in the 30S particle. May play a critical role in biogenesis of 30S subunits. This chain is Ribosomal RNA small subunit methyltransferase A, found in Yersinia pestis bv. Antiqua (strain Antiqua).